Consider the following 190-residue polypeptide: Threonylcarbamoyl-AMP synthase (190 aa).

Residues 7 to 190 (RDAIAAAIDV…ALTGELFRQG (184 aa)) form the YrdC-like domain.

This sequence belongs to the SUA5 family. TsaC subfamily.

The protein resides in the cytoplasm. It carries out the reaction L-threonine + hydrogencarbonate + ATP = L-threonylcarbamoyladenylate + diphosphate + H2O. Required for the formation of a threonylcarbamoyl group on adenosine at position 37 (t(6)A37) in tRNAs that read codons beginning with adenine. Catalyzes the conversion of L-threonine, HCO(3)(-)/CO(2) and ATP to give threonylcarbamoyl-AMP (TC-AMP) as the acyladenylate intermediate, with the release of diphosphate. This is Threonylcarbamoyl-AMP synthase from Escherichia coli O9:H4 (strain HS).